Reading from the N-terminus, the 184-residue chain is ATP-dependent protease subunit HslV (184 aa).

Residue Thr12 is part of the active site. Residues Gly167, Cys170, and Thr173 each coordinate Na(+).

Belongs to the peptidase T1B family. HslV subfamily. In terms of assembly, a double ring-shaped homohexamer of HslV is capped on each side by a ring-shaped HslU homohexamer. The assembly of the HslU/HslV complex is dependent on binding of ATP.

Its subcellular location is the cytoplasm. It catalyses the reaction ATP-dependent cleavage of peptide bonds with broad specificity.. With respect to regulation, allosterically activated by HslU binding. Its function is as follows. Protease subunit of a proteasome-like degradation complex believed to be a general protein degrading machinery. The sequence is that of ATP-dependent protease subunit HslV from Wolbachia sp. subsp. Drosophila simulans (strain wRi).